A 29-amino-acid polypeptide reads, in one-letter code: Varv peptide E (29 aa).

The segment at residues Gly-1–Asn-29 is a cross-link (cyclopeptide (Gly-Asn)). 3 cysteine pairs are disulfide-bonded: Cys-5–Cys-19, Cys-9–Cys-21, and Cys-14–Cys-26.

In terms of processing, this is a cyclic peptide.

Its function is as follows. Probably participates in a plant defense mechanism. Has cytotoxic activity against human lymphoma U-937 GTB and human myeloma RPMI-8226/s cell lines. This Viola arvensis (European field pansy) protein is Varv peptide E.